A 217-amino-acid chain; its full sequence is Thiamine-phosphate synthase (217 aa).

Residues 42–46 and D77 each bind 4-amino-2-methyl-5-(diphosphooxymethyl)pyrimidine; that span reads QFRDK. Residues D78 and D97 each contribute to the Mg(2+) site. Position 117 (S117) interacts with 4-amino-2-methyl-5-(diphosphooxymethyl)pyrimidine. 144-146 contacts 2-[(2R,5Z)-2-carboxy-4-methylthiazol-5(2H)-ylidene]ethyl phosphate; that stretch reads TIS. Residue K147 participates in 4-amino-2-methyl-5-(diphosphooxymethyl)pyrimidine binding. 2-[(2R,5Z)-2-carboxy-4-methylthiazol-5(2H)-ylidene]ethyl phosphate is bound by residues G175 and 195–196; that span reads IT.

It belongs to the thiamine-phosphate synthase family. Requires Mg(2+) as cofactor.

It catalyses the reaction 2-[(2R,5Z)-2-carboxy-4-methylthiazol-5(2H)-ylidene]ethyl phosphate + 4-amino-2-methyl-5-(diphosphooxymethyl)pyrimidine + 2 H(+) = thiamine phosphate + CO2 + diphosphate. The catalysed reaction is 2-(2-carboxy-4-methylthiazol-5-yl)ethyl phosphate + 4-amino-2-methyl-5-(diphosphooxymethyl)pyrimidine + 2 H(+) = thiamine phosphate + CO2 + diphosphate. The enzyme catalyses 4-methyl-5-(2-phosphooxyethyl)-thiazole + 4-amino-2-methyl-5-(diphosphooxymethyl)pyrimidine + H(+) = thiamine phosphate + diphosphate. The protein operates within cofactor biosynthesis; thiamine diphosphate biosynthesis; thiamine phosphate from 4-amino-2-methyl-5-diphosphomethylpyrimidine and 4-methyl-5-(2-phosphoethyl)-thiazole: step 1/1. In terms of biological role, condenses 4-methyl-5-(beta-hydroxyethyl)thiazole monophosphate (THZ-P) and 2-methyl-4-amino-5-hydroxymethyl pyrimidine pyrophosphate (HMP-PP) to form thiamine monophosphate (TMP). This Levilactobacillus brevis (strain ATCC 367 / BCRC 12310 / CIP 105137 / JCM 1170 / LMG 11437 / NCIMB 947 / NCTC 947) (Lactobacillus brevis) protein is Thiamine-phosphate synthase.